Reading from the N-terminus, the 437-residue chain is Phosphoglucosamine mutase (437 aa).

Catalysis depends on Ser101, which acts as the Phosphoserine intermediate. Positions 101, 234, 236, and 238 each coordinate Mg(2+). Ser101 is modified (phosphoserine).

The protein belongs to the phosphohexose mutase family. Mg(2+) serves as cofactor. Activated by phosphorylation.

The catalysed reaction is alpha-D-glucosamine 1-phosphate = D-glucosamine 6-phosphate. Functionally, catalyzes the conversion of glucosamine-6-phosphate to glucosamine-1-phosphate. The polypeptide is Phosphoglucosamine mutase (Thermus thermophilus (strain ATCC BAA-163 / DSM 7039 / HB27)).